A 153-amino-acid chain; its full sequence is D-aminoacyl-tRNA deacylase (153 aa).

Residues 142–143 (GP) carry the Gly-cisPro motif, important for rejection of L-amino acids motif.

It belongs to the DTD family. Homodimer.

It is found in the cytoplasm. The enzyme catalyses glycyl-tRNA(Ala) + H2O = tRNA(Ala) + glycine + H(+). The catalysed reaction is a D-aminoacyl-tRNA + H2O = a tRNA + a D-alpha-amino acid + H(+). Its function is as follows. An aminoacyl-tRNA editing enzyme that deacylates mischarged D-aminoacyl-tRNAs. Also deacylates mischarged glycyl-tRNA(Ala), protecting cells against glycine mischarging by AlaRS. Acts via tRNA-based rather than protein-based catalysis; rejects L-amino acids rather than detecting D-amino acids in the active site. By recycling D-aminoacyl-tRNA to D-amino acids and free tRNA molecules, this enzyme counteracts the toxicity associated with the formation of D-aminoacyl-tRNA entities in vivo and helps enforce protein L-homochirality. The chain is D-aminoacyl-tRNA deacylase from Acidovorax ebreus (strain TPSY) (Diaphorobacter sp. (strain TPSY)).